The sequence spans 161 residues: 18.3 kDa class I heat shock protein (161 aa).

The sHSP domain maps to 48-161; sequence ETAAFANARI…KPQVKAINVY (114 aa).

This sequence belongs to the small heat shock protein (HSP20) family. As to quaternary structure, forms oligomeric structures.

The protein localises to the cytoplasm. This is 18.3 kDa class I heat shock protein (HSP18) from Oxybasis rubra (Red goosefoot).